The following is a 133-amino-acid chain: UPF0102 protein Anae109_1947 (133 aa).

This sequence belongs to the UPF0102 family.

This Anaeromyxobacter sp. (strain Fw109-5) protein is UPF0102 protein Anae109_1947.